We begin with the raw amino-acid sequence, 1198 residues long: Fibronectin type-III domain-containing protein 3a (1198 aa).

Residues 189–201 (KLKDRHGTQKDKL) are compositionally biased toward basic and acidic residues. The segment at 189–256 (KLKDRHGTQK…SQTDVEIEEK (68 aa)) is disordered. Over residues 229–247 (GISTGSTKSKSVGKGKSNS) the composition is skewed to low complexity. Fibronectin type-III domains are found at residues 269–370 (NIAK…TMSC), 374–466 (APNL…TSGT), 470–563 (TPAS…TCPD), 567–661 (APSK…TPAV), 665–758 (PCQP…TAPG), 762–852 (QCKP…TPAS), 864–951 (SEDE…TKPL), 952–1045 (PPDP…TPKS), and 1046–1151 (VPAA…TEPP). The segment at 553–574 (SETVDYTTCPDKPGAPSKPSVK) is disordered. A helical transmembrane segment spans residues 1172–1192 (VCAAVILALFAIFSILIAVII).

It belongs to the FNDC3 family.

Its subcellular location is the golgi apparatus membrane. In Gallus gallus (Chicken), this protein is Fibronectin type-III domain-containing protein 3a (FNDC3A).